The chain runs to 263 residues: Nuclear egress protein 2 (263 aa).

The Perinuclear space portion of the chain corresponds to 1–235; the sequence is MASGKKLIDQ…STSLTGRCPS (235 aa). A helical transmembrane segment spans residues 236-256; the sequence is WGAACALLLLSLAVGLMAILA. Topologically, residues 257–263 are nuclear; sequence AKLMQWP.

It belongs to the herpesviridae NEC2 protein family. In terms of assembly, forms a heterohexameric complex with NEC1. In terms of processing, phosphorylated.

It is found in the host nucleus inner membrane. In terms of biological role, plays an essential role in virion nuclear egress, the first step of virion release from infected cell. Within the host nucleus, NEC1 interacts with the newly formed capsid through the vertexes and directs it to the inner nuclear membrane by associating with NEC2. Induces the budding of the capsid at the inner nuclear membrane as well as its envelopment into the perinuclear space. There, the NEC1/NEC2 complex promotes the fusion of the enveloped capsid with the outer nuclear membrane and the subsequent release of the viral capsid into the cytoplasm where it will reach the secondary budding sites in the host Golgi or trans-Golgi network. This is Nuclear egress protein 2 from Connochaetes taurinus (Blue wildebeest).